We begin with the raw amino-acid sequence, 193 residues long: Ion-translocating oxidoreductase complex subunit A (193 aa).

The next 6 membrane-spanning stretches (helical) occupy residues 5-25, 39-59, 62-82, 102-122, 134-154, and 171-191; these read LLLF…FLGL, IGMG…AWMV, FILL…LVIA, LLGI…VALL, AVYG…FAAI, and SIAL…TGLV.

Belongs to the NqrDE/RnfAE family. The complex is composed of six subunits: RnfA, RnfB, RnfC, RnfD, RnfE and RnfG.

It localises to the cell inner membrane. In terms of biological role, part of a membrane-bound complex that couples electron transfer with translocation of ions across the membrane. The chain is Ion-translocating oxidoreductase complex subunit A from Yersinia pestis (strain Pestoides F).